Here is a 310-residue protein sequence, read N- to C-terminus: Glutaminase (310 aa).

Substrate is bound by residues serine 67, asparagine 118, glutamate 161, asparagine 168, tyrosine 192, tyrosine 244, and valine 262.

The protein belongs to the glutaminase family. As to quaternary structure, homotetramer.

It carries out the reaction L-glutamine + H2O = L-glutamate + NH4(+). This is Glutaminase from Legionella pneumophila (strain Corby).